A 252-amino-acid polypeptide reads, in one-letter code: MTAAGVRATARIGARGDGRGGTSLPVLEGEGPLALRRTRASGSEARVMLVGAMSGPLGGDHFTVEATVAAGARLHVGSAAATIALPGQAKGEARYDVLLDVAAGGELRWLPEQLISAGGSELYVSTRIDLEPGARLVFREEQVLGRVGEEPGRLTSRLTLRIGGRAVLDQELACGPGAPGGWDGPAVLGGHRALGQLVVVRPEFEREPVRARLLGESAALTPLGGAAALVTALAPDALLLRRVLDEALSSLG.

This sequence belongs to the UreD family. UreD, UreF and UreG form a complex that acts as a GTP-hydrolysis-dependent molecular chaperone, activating the urease apoprotein by helping to assemble the nickel containing metallocenter of UreC. The UreE protein probably delivers the nickel.

The protein resides in the cytoplasm. In terms of biological role, required for maturation of urease via the functional incorporation of the urease nickel metallocenter. The protein is Urease accessory protein UreD of Streptomyces avermitilis (strain ATCC 31267 / DSM 46492 / JCM 5070 / NBRC 14893 / NCIMB 12804 / NRRL 8165 / MA-4680).